A 1266-amino-acid polypeptide reads, in one-letter code: Intermembrane phospholipid transporter YhdP (1266 aa).

Residues 1 to 5 lie on the Cytoplasmic side of the membrane; the sequence is MRRLP. The helical transmembrane segment at 6–26 threads the bilayer; sequence GILLLTGAALVVIAALLVSGL. Over 27–1266 the chain is Periplasmic; sequence RIALPHLDAW…LRQPRKEKAQ (1240 aa). A P-helix region spans residues 94–103; that stretch reads VWQSLLHMRW. The C-helix_2 stretch occupies residues 1121 to 1144; it reads HAGQLLRLLSVDALMRKLRFDFRD. The tract at residues 1203–1237 is C-helix_1; it reads ISATVGVAAAFAVNPIVGAAVFAASKVLGPLWSKV.

It is found in the cell inner membrane. In terms of biological role, involved in outer membrane lipid homeostasis. Likely transports phospholipids between the inner membrane and the outer membrane. It would provide a bridge-like structure that protects phospholipids as they travel across the periplasm. The phosphate-containing molecules are captured along the length of a hydrophobic groove that is continuous along all but the extreme N-terminus of the protein. It also appears to control, directly or indirectly, levels of cyclic enterobacterial common antigen (cyclic ECA), a soluble cyclic ECA molecule present in the periplasm. TamB, YdbH and YhdP are redundant, but not equivalent, in performing an essential function for growth and maintaining lipid homeostasis in the outer membrane. The transport functions of TamB and YhdP could be differentiated according to the fatty acid saturation state of the phospholipids, with TamB transporting more unsaturated phospholipids and YhdP more saturated phospholipids. Any of these three proteins is sufficient for growth. This Escherichia coli (strain K12) protein is Intermembrane phospholipid transporter YhdP (yhdP).